Here is a 282-residue protein sequence, read N- to C-terminus: Transcription factor HES-1 (282 aa).

The tract at residues Met1–Lys44 is disordered. The segment covering Ser10–Val21 has biased composition (low complexity). Basic and acidic residues predominate over residues Asp26 to Arg35. Residues His34–Leu91 form the bHLH domain. Positions Tyr110–Leu143 constitute an Orange domain. Disordered stretches follow at residues Gln158–Pro204 and Thr256–Asn282. Pro residues-rich tracts occupy residues Gln164–Pro174 and Phe182–Ser202. Over residues Ser264–Ser275 the composition is skewed to low complexity. Positions Trp277–Trp280 match the WRPW motif motif.

Interacts with SIRT1. Transcription repression requires formation of a complex with a corepressor protein of the Groucho/TLE family. Interacts (via WPRW motif) with TLE1, and more weakly with TLE2. Interacts with HES6. Interacts with an FA complex, composed of FANCA, FANCF, FANCG and FANCL, but not of FANCC, nor FANCE. In terms of tissue distribution, expressed at high levels in undifferentiated neural precursor cells, but the level of expression decreases as neural differentiation proceeds.

Its subcellular location is the nucleus. In terms of biological role, transcriptional repressor of genes that require a bHLH protein for their transcription. May act as a negative regulator of myogenesis by inhibiting the functions of MYOD1 and ASH1. Binds DNA on N-box motifs: 5'-CACNAG-3' with high affinity and on E-box motifs: 5'-CANNTG-3' with low affinity. May play a role in a functional FA core complex response to DNA cross-link damage, being required for the stability and nuclear localization of FA core complex proteins, as well as for FANCD2 monoubiquitination in response to DNA damage. The polypeptide is Transcription factor HES-1 (Hes1) (Mus musculus (Mouse)).